The sequence spans 187 residues: Homeobox protein engrailed-like ceh-16 (187 aa).

3 disordered regions span residues 14-43 (PYPC…NGTP), 60-100 (SDRP…DQLD), and 144-167 (KSTS…HPSI). Positions 20–39 (PTISTPATSPSSISPTFASP) are enriched in low complexity. A DNA-binding region (homeobox) is located at residues 87–146 (EKRPRTAFTGDQLDRLKTEFRESRYLTEKRRQELAHELGLNESQIKIWFQNKRAKLKKST). The segment covering 145–163 (STSSVPRDRCSSVTPNPHN) has biased composition (polar residues).

The protein belongs to the engrailed homeobox family. In terms of tissue distribution, expressed in seam cells.

It is found in the nucleus. The protein localises to the cytoplasm. Functionally, transcriptional regulator which binds to DNA to regulate gene expression and promote seam cell development and differentiation during embryogenesis. Plays a role in maintaining the boundaries between the lateral rows of seam cells and the ventral and dorsal row of epidermal cells during embryonic development. Negatively regulates the expression of the fusion effector protein eff-1 to prevent seam cell fusion with the dorsal and ventral epidermal cells during embryonic elongation. Positively regulates seam cell self-renewal and expansion during the L2 larval stage to promote seam cell development. This role does not seem to be via regulation of eff-1 expression. Specifically, it is required for the asymmetric division of the V5.p seam cell during the L2 larval stage, and in turn the asymmetric nuclear distribution of pop-1 in V5.p daughter cells. The sequence is that of Homeobox protein engrailed-like ceh-16 from Caenorhabditis elegans.